Here is a 244-residue protein sequence, read N- to C-terminus: MTLRHHFELRETIATILADEELVIETACEGIRTARYELERYIIQDPFFNSSFEPLTITQGPDIIKNMAAAAWKAGVGPMAAVAGAIAHAGVSAAQKKGASFCIIDNGGDIAMITDRPVRVGLYAGNSPLSGKYAFFIPPKNEIYGICTSSATVGHSFSFGTADSVTVFSRDPLLADAVATAVCNVLTIADQSCLDRVDSHIDGIFAVFGEQSIIWGDIPQIIRAENRKDLITAGGLGFFPGTLI.

This sequence belongs to the UPF0280 family.

This Methanospirillum hungatei JF-1 (strain ATCC 27890 / DSM 864 / NBRC 100397 / JF-1) protein is UPF0280 protein Mhun_0136.